The chain runs to 199 residues: ATP-dependent Clp protease proteolytic subunit (199 aa).

Residue serine 102 is the Nucleophile of the active site. Histidine 127 is a catalytic residue.

Belongs to the peptidase S14 family. In terms of assembly, component of the chloroplastic Clp protease core complex.

The protein resides in the plastid. The protein localises to the chloroplast stroma. It carries out the reaction Hydrolysis of proteins to small peptides in the presence of ATP and magnesium. alpha-casein is the usual test substrate. In the absence of ATP, only oligopeptides shorter than five residues are hydrolyzed (such as succinyl-Leu-Tyr-|-NHMec, and Leu-Tyr-Leu-|-Tyr-Trp, in which cleavage of the -Tyr-|-Leu- and -Tyr-|-Trp bonds also occurs).. Functionally, cleaves peptides in various proteins in a process that requires ATP hydrolysis. Has a chymotrypsin-like activity. Plays a major role in the degradation of misfolded proteins. In Physcomitrium patens (Spreading-leaved earth moss), this protein is ATP-dependent Clp protease proteolytic subunit.